Here is a 125-residue protein sequence, read N- to C-terminus: Ribonuclease P protein component (125 aa).

Belongs to the RnpA family. In terms of assembly, consists of a catalytic RNA component (M1 or rnpB) and a protein subunit.

The catalysed reaction is Endonucleolytic cleavage of RNA, removing 5'-extranucleotides from tRNA precursor.. In terms of biological role, RNaseP catalyzes the removal of the 5'-leader sequence from pre-tRNA to produce the mature 5'-terminus. It can also cleave other RNA substrates such as 4.5S RNA. The protein component plays an auxiliary but essential role in vivo by binding to the 5'-leader sequence and broadening the substrate specificity of the ribozyme. This Clostridium botulinum (strain Alaska E43 / Type E3) protein is Ribonuclease P protein component.